The chain runs to 130 residues: Large ribosomal subunit protein eL32 (130 aa).

Ser-40 carries the phosphoserine modification.

The protein belongs to the eukaryotic ribosomal protein eL32 family. As to quaternary structure, component of the large ribosomal subunit (LSU). Mature yeast ribosomes consist of a small (40S) and a large (60S) subunit. The 40S small subunit contains 1 molecule of ribosomal RNA (18S rRNA) and 33 different proteins (encoded by 57 genes). The large 60S subunit contains 3 rRNA molecules (25S, 5.8S and 5S rRNA) and 46 different proteins (encoded by 81 genes).

The protein resides in the cytoplasm. Component of the ribosome, a large ribonucleoprotein complex responsible for the synthesis of proteins in the cell. The small ribosomal subunit (SSU) binds messenger RNAs (mRNAs) and translates the encoded message by selecting cognate aminoacyl-transfer RNA (tRNA) molecules. The large subunit (LSU) contains the ribosomal catalytic site termed the peptidyl transferase center (PTC), which catalyzes the formation of peptide bonds, thereby polymerizing the amino acids delivered by tRNAs into a polypeptide chain. The nascent polypeptides leave the ribosome through a tunnel in the LSU and interact with protein factors that function in enzymatic processing, targeting, and the membrane insertion of nascent chains at the exit of the ribosomal tunnel. In Saccharomyces cerevisiae (strain ATCC 204508 / S288c) (Baker's yeast), this protein is Large ribosomal subunit protein eL32.